The chain runs to 125 residues: Glycine cleavage system H protein (125 aa).

The region spanning 23 to 105 is the Lipoyl-binding domain; that stretch reads VSTVGITEHA…FEGGWLFKVR (83 aa). Residue Lys-64 is modified to N6-lipoyllysine.

This sequence belongs to the GcvH family. In terms of assembly, the glycine cleavage system is composed of four proteins: P, T, L and H. The cofactor is (R)-lipoate.

The glycine cleavage system catalyzes the degradation of glycine. The H protein shuttles the methylamine group of glycine from the P protein to the T protein. The sequence is that of Glycine cleavage system H protein from Streptomyces coelicolor (strain ATCC BAA-471 / A3(2) / M145).